The chain runs to 274 residues: Penicillin-insensitive murein endopeptidase (274 aa).

The N-terminal stretch at 1–19 (MKKTAIALLAWFVSSASLA) is a signal peptide. 3 cysteine pairs are disulfide-bonded: Cys44-Cys265, Cys187-Cys235, and Cys216-Cys223. 6 residues coordinate Zn(2+): His110, His113, Asp120, Asp147, His150, and His211. The interval 225 to 274 (DQPLPPPGDGCGAELQSWFEPPKPGTTKPEKKTPPPLPPSCQALLDEHVL) is disordered.

The protein belongs to the peptidase M74 family. Dimer. Requires Zn(2+) as cofactor.

It localises to the periplasm. Murein endopeptidase that cleaves the D-alanyl-meso-2,6-diamino-pimelyl amide bond that connects peptidoglycan strands. Likely plays a role in the removal of murein from the sacculus. In Salmonella choleraesuis (strain SC-B67), this protein is Penicillin-insensitive murein endopeptidase.